A 309-amino-acid chain; its full sequence is Ribonuclease Z (309 aa).

Zn(2+) contacts are provided by His63, His65, Asp67, His68, His145, Asp216, and His274. Asp67 acts as the Proton acceptor in catalysis.

Belongs to the RNase Z family. In terms of assembly, homodimer. It depends on Zn(2+) as a cofactor.

The catalysed reaction is Endonucleolytic cleavage of RNA, removing extra 3' nucleotides from tRNA precursor, generating 3' termini of tRNAs. A 3'-hydroxy group is left at the tRNA terminus and a 5'-phosphoryl group is left at the trailer molecule.. Functionally, zinc phosphodiesterase, which displays some tRNA 3'-processing endonuclease activity. Probably involved in tRNA maturation, by removing a 3'-trailer from precursor tRNA. This Streptococcus mutans serotype c (strain ATCC 700610 / UA159) protein is Ribonuclease Z.